Reading from the N-terminus, the 171-residue chain is Peptide methionine sulfoxide reductase MsrA (171 aa).

The active site involves Cys12.

It belongs to the MsrA Met sulfoxide reductase family.

The enzyme catalyses L-methionyl-[protein] + [thioredoxin]-disulfide + H2O = L-methionyl-(S)-S-oxide-[protein] + [thioredoxin]-dithiol. It catalyses the reaction [thioredoxin]-disulfide + L-methionine + H2O = L-methionine (S)-S-oxide + [thioredoxin]-dithiol. In terms of biological role, has an important function as a repair enzyme for proteins that have been inactivated by oxidation. Catalyzes the reversible oxidation-reduction of methionine sulfoxide in proteins to methionine. The polypeptide is Peptide methionine sulfoxide reductase MsrA (Leuconostoc mesenteroides subsp. mesenteroides (strain ATCC 8293 / DSM 20343 / BCRC 11652 / CCM 1803 / JCM 6124 / NCDO 523 / NBRC 100496 / NCIMB 8023 / NCTC 12954 / NRRL B-1118 / 37Y)).